Consider the following 584-residue polypeptide: Insulin-like growth factor 2 mRNA-binding protein 3 (584 aa).

RRM domains follow at residues 2–75 (NKLY…HSVP) and 81–156 (RKLQ…YIPD). The disordered stretch occupies residues 160 to 199 (AQQPPQQHPQGRRGFGQRGPPRQGSPSATTRQKPQSDVPL). Positions 184 to 194 (SPSATTRQKPQ) are enriched in polar residues. KH domains lie at 196–261 (DVPL…CKII), 277–344 (EIPL…EEEI), 409–474 (SETV…QGRI), and 491–557 (KLEA…QRKI).

The protein belongs to the RRM IMP/VICKZ family. Homodimer and multimer.

It is found in the cytoplasm. It localises to the nucleus. The protein resides in the P-body. The protein localises to the stress granule. Its function is as follows. RNA-binding factor that may recruit target transcripts to cytoplasmic protein-RNA complexes (mRNPs). This transcript 'caging' into mRNPs allows mRNA transport and transient storage. It also modulates the rate and location at which target transcripts encounter the translational apparatus and shields them from endonuclease attacks or microRNA-mediated degradation. Preferentially binds to N6-methyladenosine (m6A)-containing mRNAs and increases their stability. This is Insulin-like growth factor 2 mRNA-binding protein 3 (IGF2BP3) from Gallus gallus (Chicken).